The following is a 254-amino-acid chain: Peptide methionine sulfoxide reductase A5 (254 aa).

A signal peptide spans 1 to 33 (MAISLKRNRFFIPYTNLVFFFFLCVSLLDKTVS).

Belongs to the MsrA Met sulfoxide reductase family.

It catalyses the reaction L-methionyl-[protein] + [thioredoxin]-disulfide + H2O = L-methionyl-(S)-S-oxide-[protein] + [thioredoxin]-dithiol. The enzyme catalyses [thioredoxin]-disulfide + L-methionine + H2O = L-methionine (S)-S-oxide + [thioredoxin]-dithiol. Its function is as follows. Catalyzes the reduction of methionine sulfoxide (MetSO) to methionine in proteins. Plays a protective role against oxidative stress by restoring activity to proteins that have been inactivated by methionine oxidation. MSRA family specifically reduces the MetSO S-enantiomer. This Arabidopsis thaliana (Mouse-ear cress) protein is Peptide methionine sulfoxide reductase A5 (MSRA5).